We begin with the raw amino-acid sequence, 886 residues long: uncharacterized protein (886 aa).

The first 20 residues, 1–20 (MKIIKSLILLVLFMASPAKG), serve as a signal peptide directing secretion. 5 consecutive transmembrane segments (helical) span residues 520–540 (VTIF…VEVV), 609–629 (LLFI…IITI), 647–667 (VIAF…IILM), 680–700 (ISIL…FLLI), and 779–799 (LLFY…TIVV). Positions 856–886 (EARKPQGGGEHTGKFFQNRNDVKPEQTERND) are disordered. A compositionally biased stretch (basic and acidic residues) spans 875–886 (NDVKPEQTERND).

It belongs to the TrbL/VirB6 family.

It localises to the cell membrane. This is an uncharacterized protein from Rickettsia bellii (strain RML369-C).